Consider the following 256-residue polypeptide: Ribosomal RNA small subunit methyltransferase A (256 aa).

Residues asparagine 12, leucine 14, glycine 39, glutamate 60, aspartate 85, and asparagine 103 each contribute to the S-adenosyl-L-methionine site.

It belongs to the class I-like SAM-binding methyltransferase superfamily. rRNA adenine N(6)-methyltransferase family. RsmA subfamily.

Its subcellular location is the cytoplasm. The enzyme catalyses adenosine(1518)/adenosine(1519) in 16S rRNA + 4 S-adenosyl-L-methionine = N(6)-dimethyladenosine(1518)/N(6)-dimethyladenosine(1519) in 16S rRNA + 4 S-adenosyl-L-homocysteine + 4 H(+). Its function is as follows. Specifically dimethylates two adjacent adenosines (A1518 and A1519) in the loop of a conserved hairpin near the 3'-end of 16S rRNA in the 30S particle. May play a critical role in biogenesis of 30S subunits. The sequence is that of Ribosomal RNA small subunit methyltransferase A from Legionella pneumophila (strain Lens).